A 366-amino-acid polypeptide reads, in one-letter code: Aminomethyltransferase (366 aa).

It belongs to the GcvT family. In terms of assembly, the glycine cleavage system is composed of four proteins: P, T, L and H.

The catalysed reaction is N(6)-[(R)-S(8)-aminomethyldihydrolipoyl]-L-lysyl-[protein] + (6S)-5,6,7,8-tetrahydrofolate = N(6)-[(R)-dihydrolipoyl]-L-lysyl-[protein] + (6R)-5,10-methylene-5,6,7,8-tetrahydrofolate + NH4(+). Functionally, the glycine cleavage system catalyzes the degradation of glycine. This is Aminomethyltransferase from Bordetella pertussis (strain Tohama I / ATCC BAA-589 / NCTC 13251).